The sequence spans 232 residues: Sugar fermentation stimulation protein homolog (232 aa).

It belongs to the SfsA family.

The chain is Sugar fermentation stimulation protein homolog from Moorella thermoacetica (strain ATCC 39073 / JCM 9320).